The sequence spans 215 residues: Nucleoredoxin-like protein 1 (215 aa).

The Thioredoxin; atypical domain occupies 1–165 (MADLFLDKIL…VSEIIDRSFL (165 aa)). Basic and acidic residues predominate over residues 185–194 (IKYKDETTNE). Residues 185–215 (IKYKDETTNEKKKRKHCDDEDEGGGGGTEFF) are disordered.

The protein belongs to the nucleoredoxin family.

Its subcellular location is the cell projection. It is found in the cilium. The protein localises to the photoreceptor outer segment. In terms of biological role, plays an important role in retinal cone photoreceptor survival. May play a role in cone cell viability, slowing down cone degeneration, does not seem to play a role in degenerating rods. This chain is Nucleoredoxin-like protein 1 (nxnl1), found in Xenopus laevis (African clawed frog).